The sequence spans 242 residues: tRNA (guanine-N(7)-)-methyltransferase (242 aa).

4 residues coordinate S-adenosyl-L-methionine: Glu66, Glu91, Asp118, and Asp141. The active site involves Asp141. Substrate-binding positions include Lys145, Asp177, and 214-217; that span reads TKFE.

This sequence belongs to the class I-like SAM-binding methyltransferase superfamily. TrmB family. Monomer.

The enzyme catalyses guanosine(46) in tRNA + S-adenosyl-L-methionine = N(7)-methylguanosine(46) in tRNA + S-adenosyl-L-homocysteine. The protein operates within tRNA modification; N(7)-methylguanine-tRNA biosynthesis. Catalyzes the formation of N(7)-methylguanine at position 46 (m7G46) in tRNA. The protein is tRNA (guanine-N(7)-)-methyltransferase of Buchnera aphidicola subsp. Baizongia pistaciae (strain Bp).